The following is a 792-amino-acid chain: Lon protease (792 aa).

The Lon N-terminal domain maps to 16 to 208; that stretch reads LPILPLRETV…KVTYYLTREL (193 aa). 360-367 is an ATP binding site; sequence GPPGVGKT. The region spanning 597 to 778 is the Lon proteolytic domain; sequence KDEVGVATGL…DEVLNLALLE (182 aa). Residues Ser684 and Lys727 contribute to the active site.

The protein belongs to the peptidase S16 family. Homohexamer. Organized in a ring with a central cavity.

Its subcellular location is the cytoplasm. It carries out the reaction Hydrolysis of proteins in presence of ATP.. ATP-dependent serine protease that mediates the selective degradation of mutant and abnormal proteins as well as certain short-lived regulatory proteins. Required for cellular homeostasis and for survival from DNA damage and developmental changes induced by stress. Degrades polypeptides processively to yield small peptide fragments that are 5 to 10 amino acids long. Binds to DNA in a double-stranded, site-specific manner. This is Lon protease from Dictyoglomus thermophilum (strain ATCC 35947 / DSM 3960 / H-6-12).